The sequence spans 104 residues: Large ribosomal subunit protein uL23 (104 aa).

It belongs to the universal ribosomal protein uL23 family. In terms of assembly, part of the 50S ribosomal subunit. Contacts protein L29, and trigger factor when it is bound to the ribosome.

Functionally, one of the early assembly proteins it binds 23S rRNA. One of the proteins that surrounds the polypeptide exit tunnel on the outside of the ribosome. Forms the main docking site for trigger factor binding to the ribosome. This Leptospira interrogans serogroup Icterohaemorrhagiae serovar copenhageni (strain Fiocruz L1-130) protein is Large ribosomal subunit protein uL23.